The following is a 210-amino-acid chain: Oxygen-insensitive NADPH nitroreductase (210 aa).

150 to 155 (GVSLMG) contacts NADP(+).

The protein belongs to the nitroreductase family.

In terms of biological role, reduction of a variety of nitroaromatic compounds using NADPH as source of reducing equivalents; two electrons are transferred. The polypeptide is Oxygen-insensitive NADPH nitroreductase (rdxA) (Helicobacter pylori (strain J99 / ATCC 700824) (Campylobacter pylori J99)).